The chain runs to 901 residues: Probable inorganic carbon transporter subunit DabA (901 aa).

Zn(2+)-binding residues include C424, D426, H606, and C621.

The protein belongs to the inorganic carbon transporter (TC 9.A.2) DabA family. In terms of assembly, forms a complex with DabB. Zn(2+) is required as a cofactor.

The protein resides in the cell membrane. Its function is as follows. Part of an energy-coupled inorganic carbon pump. The sequence is that of Probable inorganic carbon transporter subunit DabA from Staphylococcus aureus (strain bovine RF122 / ET3-1).